The chain runs to 507 residues: Proline--tRNA ligase (507 aa).

Belongs to the class-II aminoacyl-tRNA synthetase family. ProS type 3 subfamily. In terms of assembly, homodimer.

The protein localises to the cytoplasm. The catalysed reaction is tRNA(Pro) + L-proline + ATP = L-prolyl-tRNA(Pro) + AMP + diphosphate. Its function is as follows. Catalyzes the attachment of proline to tRNA(Pro) in a two-step reaction: proline is first activated by ATP to form Pro-AMP and then transferred to the acceptor end of tRNA(Pro). In Protochlamydia amoebophila (strain UWE25), this protein is Proline--tRNA ligase.